The sequence spans 380 residues: Queuine tRNA-ribosyltransferase (380 aa).

Asp-96 serves as the catalytic Proton acceptor. Residues 96–100, Asp-150, Gln-193, and Gly-220 contribute to the substrate site; that span reads DSGGF. An RNA binding region spans residues 251–257; the sequence is GVGAPDS. Asp-270 serves as the catalytic Nucleophile. The RNA binding; important for wobble base 34 recognition stretch occupies residues 275 to 279; the sequence is TRIAR. Cys-308, Cys-310, Cys-313, and His-339 together coordinate Zn(2+).

Belongs to the queuine tRNA-ribosyltransferase family. In terms of assembly, homodimer. Within each dimer, one monomer is responsible for RNA recognition and catalysis, while the other monomer binds to the replacement base PreQ1. Zn(2+) serves as cofactor.

It carries out the reaction 7-aminomethyl-7-carbaguanine + guanosine(34) in tRNA = 7-aminomethyl-7-carbaguanosine(34) in tRNA + guanine. It participates in tRNA modification; tRNA-queuosine biosynthesis. Catalyzes the base-exchange of a guanine (G) residue with the queuine precursor 7-aminomethyl-7-deazaguanine (PreQ1) at position 34 (anticodon wobble position) in tRNAs with GU(N) anticodons (tRNA-Asp, -Asn, -His and -Tyr). Catalysis occurs through a double-displacement mechanism. The nucleophile active site attacks the C1' of nucleotide 34 to detach the guanine base from the RNA, forming a covalent enzyme-RNA intermediate. The proton acceptor active site deprotonates the incoming PreQ1, allowing a nucleophilic attack on the C1' of the ribose to form the product. After dissociation, two additional enzymatic reactions on the tRNA convert PreQ1 to queuine (Q), resulting in the hypermodified nucleoside queuosine (7-(((4,5-cis-dihydroxy-2-cyclopenten-1-yl)amino)methyl)-7-deazaguanosine). The protein is Queuine tRNA-ribosyltransferase of Streptococcus mutans serotype c (strain ATCC 700610 / UA159).